Consider the following 496-residue polypeptide: Apolipoprotein N-acyltransferase (496 aa).

The next 6 membrane-spanning stretches (helical) occupy residues 23 to 43 (GIAT…FILW), 50 to 70 (LANF…LYEL), 84 to 104 (LIIS…LVYL), 126 to 146 (LTIK…ILSQ), 171 to 191 (WIGA…IYLI), and 205 to 225 (FLFG…TNPI). Residues 236-464 (WQTNMPTREK…NDVVNPNFSI (229 aa)) enclose the CN hydrolase domain. The active-site Proton acceptor is the glutamate 276. The active site involves lysine 325. Cysteine 374 serves as the catalytic Nucleophile. Residues 476 to 496 (PLFLLCLFLIGLNLYFGKFTN) traverse the membrane as a helical segment.

This sequence belongs to the CN hydrolase family. Apolipoprotein N-acyltransferase subfamily.

Its subcellular location is the cell inner membrane. It carries out the reaction N-terminal S-1,2-diacyl-sn-glyceryl-L-cysteinyl-[lipoprotein] + a glycerophospholipid = N-acyl-S-1,2-diacyl-sn-glyceryl-L-cysteinyl-[lipoprotein] + a 2-acyl-sn-glycero-3-phospholipid + H(+). The protein operates within protein modification; lipoprotein biosynthesis (N-acyl transfer). Its function is as follows. Catalyzes the phospholipid dependent N-acylation of the N-terminal cysteine of apolipoprotein, the last step in lipoprotein maturation. The polypeptide is Apolipoprotein N-acyltransferase (Prochlorococcus marinus subsp. pastoris (strain CCMP1986 / NIES-2087 / MED4)).